We begin with the raw amino-acid sequence, 198 residues long: Na(+)-translocating NADH-quinone reductase subunit E (198 aa).

The next 6 helical transmembrane spans lie at 11–31, 35–55, 77–97, 109–129, 140–160, and 176–196; these read AVFV…FLAV, VSTA…SVPA, FLNF…LEMI, LGIF…VSFM, IVYG…LAGI, and LGIT…FSGV.

This sequence belongs to the NqrDE/RnfAE family. In terms of assembly, composed of six subunits; NqrA, NqrB, NqrC, NqrD, NqrE and NqrF.

Its subcellular location is the cell inner membrane. It carries out the reaction a ubiquinone + n Na(+)(in) + NADH + H(+) = a ubiquinol + n Na(+)(out) + NAD(+). Its function is as follows. NQR complex catalyzes the reduction of ubiquinone-1 to ubiquinol by two successive reactions, coupled with the transport of Na(+) ions from the cytoplasm to the periplasm. NqrA to NqrE are probably involved in the second step, the conversion of ubisemiquinone to ubiquinol. The protein is Na(+)-translocating NADH-quinone reductase subunit E of Yersinia enterocolitica serotype O:8 / biotype 1B (strain NCTC 13174 / 8081).